The following is a 475-amino-acid chain: MSSPNIWSTGSSVYSTPVFSQKMTVWILLLLSLYPGFTSQKSDDDYEDYASNKTWVLTPKVPEGDVTVILNNLLEGYDNKLRPDIGVKPTLIHTDMYVNSIGPVNAINMEYTIDIFFAQTWYDRRLKFNSTIKVLRLNSNMVGKIWIPDTFFRNSKKADAHWITTPNRMLRIWNDGRVLYTLRLTIDAECQLQLHNFPMDEHSCPLEFSSYGYPREEIVYQWKRSSVEVGDTRSWRLYQFSFVGLRNTTEVVKTTSGDYVVMSVYFDLSRRMGYFTIQTYIPCTLIVVLSWVSFWINKDAVPARTSLGITTVLTMTTLSTIARKSLPKVSYVTAMDLFVSVCFIFVFSALVEYGTLHYFVSNRKPSKDKDKKKKNPLLRMFSFKAPTIDIRPRSATIQMNNATHLQERDEEYGYECLDGKDCASFFCCFEDCRTGAWRHGRIHIRIAKMDSYARIFFPTAFCLFNLVYWVSYLYL.

An N-terminal signal peptide occupies residues 1–39 (MSSPNIWSTGSSVYSTPVFSQKMTVWILLLLSLYPGFTS). The Extracellular segment spans residues 40–275 (QKSDDDYEDY…FDLSRRMGYF (236 aa)). N-linked (GlcNAc...) asparagine glycosylation is found at asparagine 52 and asparagine 129. Cysteines 190 and 204 form a disulfide. Asparagine 247 is a glycosylation site (N-linked (GlcNAc...) asparagine). A helical transmembrane segment spans residues 276-296 (TIQTYIPCTLIVVLSWVSFWI). Residues 297 to 302 (NKDAVP) lie on the Cytoplasmic side of the membrane. The helical transmembrane segment at 303-322 (ARTSLGITTVLTMTTLSTIA) threads the bilayer. The Extracellular segment spans residues 323–334 (RKSLPKVSYVTA). A helical membrane pass occupies residues 335–359 (MDLFVSVCFIFVFSALVEYGTLHYF). The Cytoplasmic segment spans residues 360–451 (VSNRKPSKDK…IHIRIAKMDS (92 aa)). The tract at residues 433-450 (RTGAWRHGRIHIRIAKMD) is interaction with GABARAP. A helical membrane pass occupies residues 452–472 (YARIFFPTAFCLFNLVYWVSY). Residues 473 to 475 (LYL) lie on the Extracellular side of the membrane.

This sequence belongs to the ligand-gated ion channel (TC 1.A.9) family. Gamma-aminobutyric acid receptor (TC 1.A.9.5) subfamily. GABRG2 sub-subfamily. In terms of assembly, heteropentamer, formed by a combination of alpha (GABRA1-6), beta (GABRB1-3), gamma (GABRG1-3), delta (GABRD), epsilon (GABRE), rho (GABRR1-3), pi (GABRP) and theta (GABRQ) chains, each subunit exhibiting distinct physiological and pharmacological properties. Interacts with GABARAP. Interacts with KIF21B. Identified in a complex of 720 kDa composed of LHFPL4, NLGN2, GABRA1, GABRB2, GABRG2 and GABRB3. Interacts with LHFPL4. Interacts with SHISA7; interaction leads to the regulation of GABA(A) receptor trafficking, channel deactivation kinetics and pharmacology. Post-translationally, palmitoylated by ZDHHC3/GODZ; required for the accumulation of GABA(A) receptors at the postsynaptic membrane of inhibitory GABAergic synapses.

It localises to the postsynaptic cell membrane. Its subcellular location is the cell membrane. The protein localises to the cell projection. The protein resides in the dendrite. It is found in the cytoplasmic vesicle membrane. The enzyme catalyses chloride(in) = chloride(out). Its activity is regulated as follows. Allosterically activated by benzodiazepines. Activated by pentobarbital. Potentiated by etomidate, propofol, pregnanolone. Inhibited by the antagonist bicuculline. Inhibited by zinc ions. Potentiated by histamine. Gamma subunit of the heteropentameric ligand-gated chloride channel gated by gamma-aminobutyric acid (GABA), a major inhibitory neurotransmitter in the brain. GABA-gated chloride channels, also named GABA(A) receptors (GABAAR), consist of five subunits arranged around a central pore and contain GABA active binding site(s) located at the alpha and beta subunit interface(s). When activated by GABA, GABAARs selectively allow the flow of chloride anions across the cell membrane down their electrochemical gradient. Gamma-2/GABRG2-containing GABAARs are found at both synaptic and extrasynaptic sites. Chloride influx into the postsynaptic neuron following GABAAR opening decreases the neuron ability to generate a new action potential, thereby reducing nerve transmission. GABAARs containing alpha-1 and beta-2 or -3 subunits exhibit synaptogenic activity; the gamma-2 subunit being necessary but not sufficient to induce rapid synaptic contacts formation. Extrasynaptic gamma-2-containing receptors contribute to the tonic GABAergic inhibition. GABAARs function also as histamine receptor where histamine binds at the interface of two neighboring beta subunits and potentiates GABA response in a gamma-2 subunit-controlled manner. This is Gamma-aminobutyric acid receptor subunit gamma-2 from Homo sapiens (Human).